A 327-amino-acid polypeptide reads, in one-letter code: MDEDSPAPSLQNIIDQDSLRWIFVGGKGGVGKTTTSCSLAIQLAKNRESVLLISTDPAHNLSDAFGQKFGKDARPVNGIDNLHCMEIDPSGSIQEMIEQAQSAGGAGAGMTNMMQDIAFSIPGVDEAMSFAEVLKQVKSTSYSVIIFDTAPTGHTLRFLTFPTVLEKALGKISELSGRFGPMLGSLMGGQGGPSADDMFAKLNETRATISEVNTQFKNPDLTTFVCVCIPEFLSLYETERMVQDLTSFDIDTHNIVVNQLLYPKKGDDCELCSSRYKMQQKYLEQILDLYEDFHIVRLPQQTQEVRGVQALEKFSNLLVHPYQHIEN.

27-34 contributes to the ATP binding site; sequence KGGVGKTT. Asp-56 is an active-site residue. Residues Glu-231 and Asn-258 each coordinate ATP. The Zn(2+) site is built by Cys-269 and Cys-272.

It belongs to the arsA ATPase family. In terms of assembly, homodimer. Component of the Golgi to ER traffic (GET) complex, which is composed of GET1, GET2 and GET3. Within the complex, GET1 and GET2 form a heterotetramer which is stabilized by phosphatidylinositol binding and which binds to the GET3 homodimer. Interacts with the chloride channel protein GEF1.

The protein localises to the cytoplasm. Its subcellular location is the endoplasmic reticulum. The protein resides in the golgi apparatus. Its function is as follows. ATPase required for the post-translational delivery of tail-anchored (TA) proteins to the endoplasmic reticulum. Recognizes and selectively binds the transmembrane domain of TA proteins in the cytosol. This complex then targets to the endoplasmic reticulum by membrane-bound receptors GET1 and GET2, where the tail-anchored protein is released for insertion. This process is regulated by ATP binding and hydrolysis. ATP binding drives the homodimer towards the closed dimer state, facilitating recognition of newly synthesized TA membrane proteins. ATP hydrolysis is required for insertion. Subsequently, the homodimer reverts towards the open dimer state, lowering its affinity for the GET1-GET2 receptor, and returning it to the cytosol to initiate a new round of targeting. Cooperates with the HDEL receptor ERD2 to mediate the ATP-dependent retrieval of resident ER proteins that contain a C-terminal H-D-E-L retention signal from the Golgi to the ER. Involved in low-level resistance to the oxyanions arsenite and arsenate, and in heat tolerance. The protein is ATPase GET3 of Yarrowia lipolytica (strain CLIB 122 / E 150) (Yeast).